A 264-amino-acid polypeptide reads, in one-letter code: Glutamate racemase 2 (264 aa).

Residues 10–11 (DS) and 42–43 (YG) each bind substrate. The active-site Proton donor/acceptor is cysteine 73. 74–75 (NT) provides a ligand contact to substrate. Cysteine 181 acts as the Proton donor/acceptor in catalysis. 182–183 (TH) is a substrate binding site.

It belongs to the aspartate/glutamate racemases family.

The enzyme catalyses L-glutamate = D-glutamate. It participates in cell wall biogenesis; peptidoglycan biosynthesis. Provides the (R)-glutamate required for cell wall biosynthesis. The protein is Glutamate racemase 2 of Caldanaerobacter subterraneus subsp. tengcongensis (strain DSM 15242 / JCM 11007 / NBRC 100824 / MB4) (Thermoanaerobacter tengcongensis).